The following is a 46-amino-acid chain: Large ribosomal subunit protein bL33A (46 aa).

This sequence belongs to the bacterial ribosomal protein bL33 family.

In Mesomycoplasma hyopneumoniae (strain 7448) (Mycoplasma hyopneumoniae), this protein is Large ribosomal subunit protein bL33A.